Reading from the N-terminus, the 196-residue chain is Somatotropin (196 aa).

The first 18 residues, 1–18 (MEKVVLLLSVLSLGVVCP), serve as a signal peptide directing secretion. Gln19 is subject to Pyrrolidone carboxylic acid. His35 lines the Zn(2+) pocket. Residues Cys69 and Cys169 are joined by a disulfide bond. A Zn(2+)-binding site is contributed by Glu178. Cys186 and Cys194 form a disulfide bridge.

It belongs to the somatotropin/prolactin family.

The protein resides in the secreted. Functionally, growth hormone plays an important role in growth control and is involved in the regulation of several anabolic processes. Implicated as an osmoregulatory substance important for seawater adaptation. This chain is Somatotropin (gh), found in Siganus guttatus (Orange-spotted spinefoot).